The following is a 530-amino-acid chain: Chaperonin GroEL (530 aa).

ATP is bound by residues 30–33, Lys-51, 87–91, Gly-415, and Asp-495; these read TLGP and DGTTT.

It belongs to the chaperonin (HSP60) family. As to quaternary structure, forms a cylinder of 14 subunits composed of two heptameric rings stacked back-to-back. Interacts with the co-chaperonin GroES.

It is found in the cytoplasm. It catalyses the reaction ATP + H2O + a folded polypeptide = ADP + phosphate + an unfolded polypeptide.. Its function is as follows. Together with its co-chaperonin GroES, plays an essential role in assisting protein folding. The GroEL-GroES system forms a nano-cage that allows encapsulation of the non-native substrate proteins and provides a physical environment optimized to promote and accelerate protein folding. The chain is Chaperonin GroEL from Carsonella ruddii (strain PV).